The following is a 636-amino-acid chain: Putative lipase ATG15 (636 aa).

Residues 1–19 lie on the Cytoplasmic side of the membrane; sequence MYKYGTVVDPAMTTNRRSR. Residues 20–42 traverse the membrane as a helical; Signal-anchor for type II membrane protein segment; sequence LSGFRCASTARVTATLLLSFLAF. Over 43-636 the chain is Lumenal; the sequence is SPSSASSDFG…DDLEFATDEM (594 aa). N-linked (GlcNAc...) asparagine glycans are attached at residues asparagine 211, asparagine 233, asparagine 291, asparagine 315, and asparagine 477. The tract at residues 478–500 is disordered; sequence GTETTTTSSPSTTSTTRTRTRTS. Residues 479 to 500 are compositionally biased toward low complexity; it reads TETTTTSSPSTTSTTRTRTRTS.

This sequence belongs to the AB hydrolase superfamily. Lipase family. In terms of assembly, binds to both phosphatidylinositol (PI) and phosphatidylinositol 3,5-bisphosphate (PIP2).

The protein localises to the endosome. It is found in the multivesicular body membrane. It localises to the prevacuolar compartment membrane. The catalysed reaction is a triacylglycerol + H2O = a diacylglycerol + a fatty acid + H(+). In terms of biological role, lipase which is essential for lysis of subvacuolar cytoplasm to vacuole targeted bodies and intravacuolar autophagic bodies. Involved in the lysis of intravacuolar multivesicular body (MVB) vesicles. The intravacuolar membrane disintegration by ATG15 is critical to life span extension. Autophagy is required for proper vegetative growth, asexual/sexual reproduction, and full virulence. Autophagy is particularly involved in the biosynthesis of deoxynivalenol (DON), an important virulence determinant. The polypeptide is Putative lipase ATG15 (Gibberella zeae (strain ATCC MYA-4620 / CBS 123657 / FGSC 9075 / NRRL 31084 / PH-1) (Wheat head blight fungus)).